The chain runs to 303 residues: Recombination-associated protein RdgC (303 aa).

Belongs to the RdgC family.

It is found in the cytoplasm. The protein localises to the nucleoid. In terms of biological role, may be involved in recombination. This Salmonella newport (strain SL254) protein is Recombination-associated protein RdgC.